We begin with the raw amino-acid sequence, 1523 residues long: Slit homolog 3 protein (1523 aa).

The first 33 residues, 1–33 (MALGRTGAGAAVRARLALGLALASILSGPPAAA), serve as a signal peptide directing secretion. Residues 34-61 (CPTKCTCSAASVDCHGLGLRAVPRGIPR) form the LRRNT domain. LRR repeat units lie at residues 62 to 83 (NAER…DFAG), 86 to 107 (NLRV…AFQD), 110 to 131 (QLER…LFQS), 134 to 155 (KLTR…AFRG), 158 to 179 (GVKN…AFRA), and 182 to 203 (DLEI…SFNH). Asn-72 carries N-linked (GlcNAc...) asparagine glycosylation. Asn-192 is a glycosylation site (N-linked (GlcNAc...) asparagine). Residues 215 to 265 (NHLYCDCHLAWLSDWLRQRRTIGQFTLCMAPVHLRGFSVADVQKKEYVCPG) form the LRRCT 1 domain. The LRRNT 2 domain maps to 271 to 307 (PACNANSLSCPSACSCSNNIVDCRGKGLTEIPANLPE). An intrachain disulfide couples Cys-284 to Cys-293. 5 LRR repeats span residues 308–329 (GIVE…AFTQ), 332–353 (KLKR…AFQG), 356–377 (SLTS…LFDG), 380–401 (SLQL…TFQD), and 404–425 (NLNL…LFVP). The 51-residue stretch at 437 to 487 (NPFVCDCHLKWLADYLQDNPIETSGARCSSPRRLANKRISQIKSKKFRCSG) folds into the LRRCT 2 domain. 4 disulfides stabilise this stretch: Cys-441–Cys-464, Cys-443–Cys-485, Cys-505–Cys-511, and Cys-509–Cys-518. Residues 496 to 532 (SSECFMDLVCPEKCRCEGTIVDCSNQKLARIPSHLPE) enclose the LRRNT 3 domain. LRR repeat units lie at residues 533 to 554 (YTTD…GIFK), 558 to 579 (NLRK…AFDG), 582 to 603 (GVQE…MFRG), 606 to 627 (SLKT…TFAG), and 630 to 651 (SVRL…AFTT). The N-linked (GlcNAc...) asparagine glycan is linked to Asn-563. N-linked (GlcNAc...) asparagine glycosylation occurs at Asn-622. Residues 663–713 (NPFNCNCHMAWLGRWLRKRRIVSGNPRCQKPFFLKEIPIQDVAIQDFTCDG) form the LRRCT 3 domain. 2 disulfides stabilise this stretch: Cys-667–Cys-690 and Cys-669–Cys-711. Residues 716–752 (ESSCQLSPRCPEQCTCVETVVRCSNRGLHALPKGMPK) enclose the LRRNT 4 domain. LRR repeat units follow at residues 753 to 774 (DVTE…LSAF), 776 to 797 (QLTL…TFSN), 800 to 821 (HLST…AFNG), and 824 to 845 (SLRV…SFND). Residues Asn-784, Asn-792, and Asn-797 are each glycosylated (N-linked (GlcNAc...) asparagine). Residues 857–907 (NPLHCDCSLRWLSEWVKAGYKEPGIARCSSPESMADRLLLTTPTHRFQCKG) form the LRRCT 4 domain. EGF-like domains lie at 918 to 953 (NACL…KDCT), 955 to 994 (PINT…QRCE), 996 to 1032 (NPDD…ELCD), 1034 to 1072 (VIDY…KLCE), 1074 to 1110 (NNDD…LFCE), and 1119 to 1155 (QTSP…PRCE). Disulfide bonds link Cys-920-Cys-931, Cys-925-Cys-941, Cys-943-Cys-952, Cys-959-Cys-970, Cys-964-Cys-982, Cys-984-Cys-993, Cys-1000-Cys-1011, Cys-1005-Cys-1020, Cys-1022-Cys-1031, Cys-1038-Cys-1051, Cys-1045-Cys-1060, Cys-1062-Cys-1071, Cys-1078-Cys-1089, Cys-1083-Cys-1098, Cys-1100-Cys-1109, Cys-1123-Cys-1134, Cys-1128-Cys-1143, and Cys-1145-Cys-1154. Residue Asn-928 is glycosylated (N-linked (GlcNAc...) asparagine). Asn-1025 carries an N-linked (GlcNAc...) asparagine glycan. Positions 1158-1332 (ITVNFVGKDS…PQSLGVSPGC (175 aa)) constitute a Laminin G-like domain. Residues Asn-1181 and Asn-1247 are each glycosylated (N-linked (GlcNAc...) asparagine). Disulfide bonds link Cys-1305–Cys-1332, Cys-1355–Cys-1364, Cys-1372–Cys-1382, Cys-1377–Cys-1391, and Cys-1393–Cys-1402. EGF-like domains are found at residues 1340 to 1365 (HGLC…PLCD) and 1368 to 1403 (ARDP…ALCD). Asn-1406 carries an N-linked (GlcNAc...) asparagine glycan. The region spanning 1408-1444 (SASACSAFKCHHGQCHISDRGEPYCLCQPGFSGHHCE) is the EGF-like 9 domain. 7 disulfides stabilise this stretch: Cys-1412–Cys-1422, Cys-1417–Cys-1432, Cys-1434–Cys-1443, Cys-1449–Cys-1487, Cys-1467–Cys-1501, Cys-1478–Cys-1517, and Cys-1482–Cys-1519. Residues 1449–1523 (CMGEIVREAI…HLECGCRACS (75 aa)) enclose the CTCK domain.

It localises to the secreted. Its function is as follows. May act as molecular guidance cue in cellular migration, and function may be mediated by interaction with roundabout homolog receptors. The sequence is that of Slit homolog 3 protein (Slit3) from Mus musculus (Mouse).